A 261-amino-acid polypeptide reads, in one-letter code: Phosphate import ATP-binding protein PstB 4 (261 aa).

Positions 8 to 256 constitute an ABC transporter domain; that stretch reads IKVNNLSFYY…PHDSRTREYV (249 aa). 40–47 lines the ATP pocket; it reads GPSGCGKS.

It belongs to the ABC transporter superfamily. Phosphate importer (TC 3.A.1.7) family. The complex is composed of two ATP-binding proteins (PstB), two transmembrane proteins (PstC and PstA) and a solute-binding protein (PstS).

It is found in the cell inner membrane. It catalyses the reaction phosphate(out) + ATP + H2O = ADP + 2 phosphate(in) + H(+). Its function is as follows. Part of the ABC transporter complex PstSACB involved in phosphate import. Responsible for energy coupling to the transport system. The chain is Phosphate import ATP-binding protein PstB 4 from Trichormus variabilis (strain ATCC 29413 / PCC 7937) (Anabaena variabilis).